A 93-amino-acid polypeptide reads, in one-letter code: uncharacterized protein (93 aa).

A TRAM domain is found at 24 to 85 (QLQVGDTLKL…IQTQVGRLFF (62 aa)).

This sequence belongs to the ycf81 family.

This is an uncharacterized protein from Thermus thermophilus.